The sequence spans 156 residues: Protein-export protein SecB (156 aa).

The protein belongs to the SecB family. In terms of assembly, homotetramer, a dimer of dimers. One homotetramer interacts with 1 SecA dimer.

The protein localises to the cytoplasm. Its function is as follows. One of the proteins required for the normal export of preproteins out of the cell cytoplasm. It is a molecular chaperone that binds to a subset of precursor proteins, maintaining them in a translocation-competent state. It also specifically binds to its receptor SecA. The polypeptide is Protein-export protein SecB (Aeromonas hydrophila subsp. hydrophila (strain ATCC 7966 / DSM 30187 / BCRC 13018 / CCUG 14551 / JCM 1027 / KCTC 2358 / NCIMB 9240 / NCTC 8049)).